The sequence spans 303 residues: Probable aspartoacylase (303 aa).

His-13 and Glu-16 together coordinate Zn(2+). Substrate is bound by residues Arg-55 and 62–63 (NR). Residue His-104 participates in Zn(2+) binding. Substrate-binding residues include Glu-162 and Tyr-273.

Belongs to the AspA/AstE family. Aspartoacylase subfamily. Zn(2+) is required as a cofactor.

It catalyses the reaction an N-acyl-L-aspartate + H2O = a carboxylate + L-aspartate. This Parasynechococcus marenigrum (strain WH8102) protein is Probable aspartoacylase.